A 517-amino-acid chain; its full sequence is Crotonobetaine/carnitine--CoA ligase (517 aa).

This sequence belongs to the ATP-dependent AMP-binding enzyme family.

It carries out the reaction 4-(trimethylamino)butanoate + ATP + CoA = 4-(trimethylamino)butanoyl-CoA + AMP + diphosphate. The enzyme catalyses crotonobetaine + ATP + CoA = crotonobetainyl-CoA + AMP + diphosphate. The catalysed reaction is (R)-carnitine + ATP + CoA = (R)-carnitinyl-CoA + AMP + diphosphate. Its pathway is amine and polyamine metabolism; carnitine metabolism. Functionally, catalyzes the transfer of CoA to carnitine, generating the initial carnitinyl-CoA needed for the CaiB reaction cycle. Also has activity toward crotonobetaine and gamma-butyrobetaine. This chain is Crotonobetaine/carnitine--CoA ligase, found in Escherichia coli O127:H6 (strain E2348/69 / EPEC).